The primary structure comprises 211 residues: MNRLIVLFLIVTMICATIAVPSREELEDQKEYKRSAALAGTIIEGASLGFQILDKVLGELGKVSRKIAVGVDNESGGSWTALNAYFRSGTTDVILPEFVPNQKALLYSGRKDTGPVATGAVAAFAYYMSNGHTLGVMFSVPFDYNFYSNWWDVKVYSGKRRADQGMYEDMYYGNPYRGDNGWHQKNLGYGLRMKGIMTSAGEAILQIRISR.

The signal sequence occupies residues 1–19; that stretch reads MNRLIVLFLIVTMICATIA. Positions 20 to 34 are excised as a propeptide; the sequence is VPSREELEDQKEYKR. Positions 37–46 are plays an important role in the hemolytic activity; sequence ALAGTIIEGA. The segment at 45–64 is N-terminal region; the sequence is GASLGFQILDKVLGELGKVS. 7 residues coordinate phosphocholine: serine 88, valine 121, serine 139, proline 141, tyrosine 167, tyrosine 171, and tyrosine 172. A trp-rich region, which is important for the binding to lipid membrane region spans residues 139–154; that stretch reads SVPFDYNFYSNWWDVK. The Cell attachment site, crucial for protein stability motif lies at 177–179; it reads RGD.

It belongs to the actinoporin family. Sea anemone subfamily. As to quaternary structure, octamer or nonamer in membranes. Monomer in the soluble state.

The protein localises to the secreted. It localises to the nematocyst. The protein resides in the target cell membrane. Its function is as follows. Pore-forming protein that forms cations-selective hydrophilic pores of around 1 nm and causes cardiac stimulation and cytolysis. Pore formation is a multi-step process that involves specific recognition of membrane sphingomyelin (but neither cholesterol nor phosphatidylcholine) using aromatic rich region and adjacent phosphocholine (POC) binding site, firm binding to the membrane (mainly driven by hydrophobic interactions) accompanied by the transfer of the N-terminal region to the lipid-water interface and finally pore formation after oligomerization of monomers. This chain is DELTA-stichotoxin-Hmg2a, found in Heteractis magnifica (Magnificent sea anemone).